The primary structure comprises 191 residues: MSKHAAVESDEHVAERTAEAARQVERLTRWHDDFPTPGVRFADLTPVFADAEGFRSVIESLAACAPDADLVAGVDARGFLLGAGVAATLGTGVLAVRKGGKLPPPVISREYSLEYGSAALEIPGNGVELRGRRVLLLDDVLATGGTLAAAAHLFVEAGAQVVAAAVVLELEFLGGRARQGDYPLTSILRLP.

It belongs to the purine/pyrimidine phosphoribosyltransferase family. Homodimer.

It is found in the cytoplasm. The catalysed reaction is AMP + diphosphate = 5-phospho-alpha-D-ribose 1-diphosphate + adenine. The protein operates within purine metabolism; AMP biosynthesis via salvage pathway; AMP from adenine: step 1/1. Catalyzes a salvage reaction resulting in the formation of AMP, that is energically less costly than de novo synthesis. The polypeptide is Adenine phosphoribosyltransferase (Nocardia farcinica (strain IFM 10152)).